A 624-amino-acid polypeptide reads, in one-letter code: MEAVIQTRGLLSLPTKPIGVRSQLQPSHGLKQRLFAAKPRNLHGLSLSFNGHKKFQTFEPTLHGISISHKERSTEFICKAEAAAAGDGAVFGEGDSAAVVASPKIFGVEVATLKKIIPLGLMFFCILFNYTILRDTKDVLVVTAKGSSAEIIPFLKTWVNLPMAIGFMLLYTKLSNVLSKKALFYTVIVPFIIYFGAFGFVMYPLSNYIHPEALADKLLTTLGPRFMGPIAILRIWSFCLFYVMAELWGSVVVSVLFWGFANQITTVDEAKKFYPLFGLGANVALIFSGRTVKYFSNLRKNLGPGVDGWAVSLKAMMSIVVGMGLAICLLYWWVNRYVPLPTRSKNKKEKPKMGTMESLKFLVSSPYIRDLATLVVAYGISINLVEVTWKSKLKAQFPSPNEYSAFMGDFSTCTGVATFTMMLLSQYVFNKYGWGVAAKITPTVLLLTGVAFFSLILFGGPFAPLVAKLGMTPLLAAVYVGALQNIFSKSAKYSLFDPCKEMAYIPLDEDTKVKGKAAIDVVCNPLGKSGGALIQQFMILSFGSLANSTPYLGMILLVIVTAWLAAAKSLEGQFNSLRSEEELEKEMERASSVKIPVVSQDESGNGSLGESPSSSPEKSAPTNL.

The transit peptide at 1–79 directs the protein to the chloroplast; it reads MEAVIQTRGL…KERSTEFICK (79 aa). Ala80 is subject to N-acetylalanine. The next 6 helical transmembrane spans lie at 108–128, 182–202, 240–260, 315–335, 446–466, and 545–565; these read VEVATLKKIIPLGLMFFCILF, ALFYTVIVPFIIYFGAFGFVM, LFYVMAELWGSVVVSVLFWGF, AMMSIVVGMGLAICLLYWWVN, LLTGVAFFSLILFGGPFAPLV, and LANSTPYLGMILLVIVTAWLA. Residues 579–624 form a disordered region; it reads SEEELEKEMERASSVKIPVVSQDESGNGSLGESPSSSPEKSAPTNL. The segment covering 602 to 624 has biased composition (low complexity); it reads ESGNGSLGESPSSSPEKSAPTNL.

This sequence belongs to the ADP/ATP translocase tlc (TC 2.A.12.2) family.

It localises to the plastid. The protein resides in the chloroplast membrane. In terms of biological role, may function as an ATP importer. The chain is ADP,ATP carrier protein 1, chloroplastic (AATP1) from Arabidopsis thaliana (Mouse-ear cress).